The chain runs to 135 residues: Putative pre-16S rRNA nuclease (135 aa).

This sequence belongs to the YqgF nuclease family.

Its subcellular location is the cytoplasm. Could be a nuclease involved in processing of the 5'-end of pre-16S rRNA. The sequence is that of Putative pre-16S rRNA nuclease from Clostridium acetobutylicum (strain ATCC 824 / DSM 792 / JCM 1419 / IAM 19013 / LMG 5710 / NBRC 13948 / NRRL B-527 / VKM B-1787 / 2291 / W).